The following is a 209-amino-acid chain: Small ribosomal subunit protein uS4 (209 aa).

Zn(2+) contacts are provided by Cys-9, Cys-12, Cys-26, and Cys-31. The C4-type zinc finger occupies 9-31; that stretch reads CRLCRREGVKLYLKGERCYSPKC. One can recognise an S4 RNA-binding domain in the interval 100-162; that stretch reads RLDNVVYRLG…RNLELIRQNL (63 aa).

The protein belongs to the universal ribosomal protein uS4 family. In terms of assembly, part of the 30S ribosomal subunit. Contacts protein S5. The interaction surface between S4 and S5 is involved in control of translational fidelity. Zn(2+) is required as a cofactor.

Its function is as follows. One of the primary rRNA binding proteins, it binds directly to 16S rRNA where it helps nucleate assembly of the body and platform of the 30S subunit. This Thermus thermophilus (strain ATCC BAA-163 / DSM 7039 / HB27) protein is Small ribosomal subunit protein uS4 (rpsD).